A 172-amino-acid chain; its full sequence is Nicotinamide-nucleotide adenylyltransferase (172 aa).

It belongs to the archaeal NMN adenylyltransferase family.

The protein resides in the cytoplasm. The catalysed reaction is beta-nicotinamide D-ribonucleotide + ATP + H(+) = diphosphate + NAD(+). Its pathway is cofactor biosynthesis; NAD(+) biosynthesis; NAD(+) from nicotinamide D-ribonucleotide: step 1/1. The polypeptide is Nicotinamide-nucleotide adenylyltransferase (Sulfurisphaera tokodaii (strain DSM 16993 / JCM 10545 / NBRC 100140 / 7) (Sulfolobus tokodaii)).